Here is a 252-residue protein sequence, read N- to C-terminus: Indole-3-glycerol phosphate synthase (252 aa).

The protein belongs to the TrpC family.

It catalyses the reaction 1-(2-carboxyphenylamino)-1-deoxy-D-ribulose 5-phosphate + H(+) = (1S,2R)-1-C-(indol-3-yl)glycerol 3-phosphate + CO2 + H2O. Its pathway is amino-acid biosynthesis; L-tryptophan biosynthesis; L-tryptophan from chorismate: step 4/5. This Listeria monocytogenes serotype 4a (strain HCC23) protein is Indole-3-glycerol phosphate synthase.